The primary structure comprises 321 residues: Large ribosomal subunit protein uL3 (321 aa).

The protein belongs to the universal ribosomal protein uL3 family. As to quaternary structure, part of the 50S ribosomal subunit. Forms a cluster with proteins L14 and L24e.

One of the primary rRNA binding proteins, it binds directly near the 3'-end of the 23S rRNA, where it nucleates assembly of the 50S subunit. The sequence is that of Large ribosomal subunit protein uL3 from Nanoarchaeum equitans (strain Kin4-M).